We begin with the raw amino-acid sequence, 225 residues long: Glutathione s-transferase kappa 2 (225 aa).

Residues 15 to 17 (SPY), asparagine 52, and 200 to 201 (SD) each bind glutathione.

It belongs to the GST superfamily. Kappa family. As to expression, expressed in the pharynx, body wall muscles and epidermis. Weaker expression is seen in the intestine.

Its subcellular location is the mitochondrion. The catalysed reaction is RX + glutathione = an S-substituted glutathione + a halide anion + H(+). Its function is as follows. Has roles in respiratory and lipid metabolism. This chain is Glutathione s-transferase kappa 2 (gstk-2), found in Caenorhabditis elegans.